Reading from the N-terminus, the 151-residue chain is FAD synthase (151 aa).

Residues 21–22 (TF), 26–29 (HPGH), and Asp-104 contribute to the ATP site.

This sequence belongs to the archaeal FAD synthase family. As to quaternary structure, homodimer. Requires a divalent metal cation as cofactor.

The enzyme catalyses FMN + ATP + H(+) = FAD + diphosphate. Its pathway is cofactor biosynthesis; FAD biosynthesis; FAD from FMN: step 1/1. Catalyzes the transfer of the AMP portion of ATP to flavin mononucleotide (FMN) to produce flavin adenine dinucleotide (FAD) coenzyme. This Methanosarcina acetivorans (strain ATCC 35395 / DSM 2834 / JCM 12185 / C2A) protein is FAD synthase.